The primary structure comprises 345 residues: Adenylosuccinate synthetase (345 aa).

GTP contacts are provided by residues 18–24 (GDEGKGK) and 48–50 (GHT). The active-site Proton acceptor is the D19. Positions 19 and 48 each coordinate Mg(2+). Residues 19–22 (DEGK), 46–49 (NAGH), T133, R147, Q185, T200, and R262 each bind IMP. The active-site Proton donor is H49. 258 to 264 (TVTGRRR) is a binding site for substrate. GTP contacts are provided by residues R264, 290 to 292 (GLD), and 330 to 332 (STG).

The protein belongs to the adenylosuccinate synthetase family. Homodimer. The cofactor is Mg(2+).

The protein localises to the cytoplasm. It carries out the reaction IMP + L-aspartate + GTP = N(6)-(1,2-dicarboxyethyl)-AMP + GDP + phosphate + 2 H(+). It participates in purine metabolism; AMP biosynthesis via de novo pathway; AMP from IMP: step 1/2. Plays an important role in the de novo pathway of purine nucleotide biosynthesis. Catalyzes the first committed step in the biosynthesis of AMP from IMP. This chain is Adenylosuccinate synthetase, found in Methanocaldococcus jannaschii (strain ATCC 43067 / DSM 2661 / JAL-1 / JCM 10045 / NBRC 100440) (Methanococcus jannaschii).